The chain runs to 74 residues: MQYSALIPLFILLISLVLFCFSFRKNQSENQIVKILFFAYCIDFLALILAVMLLTFLSHGLLSLAILIPVLVFQ.

2 helical membrane passes run 3 to 23 and 35 to 55; these read YSALIPLFILLISLVLFCFSF and ILFFAYCIDFLALILAVMLLT.

It is found in the cell membrane. This is an uncharacterized protein from Mycoplasma genitalium (strain ATCC 33530 / DSM 19775 / NCTC 10195 / G37) (Mycoplasmoides genitalium).